The following is a 356-amino-acid chain: ATP-dependent 6-phosphofructokinase (356 aa).

Residues glycine 15, 78-79 (KG), and 115-118 (GEGT) each bind ATP. Glutamate 116 is a Mg(2+) binding site. Residues 138–140 (TID), arginine 175, 182–184 (MGR), glutamate 235, arginine 272, and 278–281 (HLQR) contribute to the substrate site. Aspartate 140 (proton acceptor) is an active-site residue.

It belongs to the phosphofructokinase type A (PFKA) family. Mixed-substrate PFK group III subfamily. Homodimer or homotetramer. It depends on Mg(2+) as a cofactor.

The protein localises to the cytoplasm. It carries out the reaction beta-D-fructose 6-phosphate + ATP = beta-D-fructose 1,6-bisphosphate + ADP + H(+). It functions in the pathway carbohydrate degradation; glycolysis; D-glyceraldehyde 3-phosphate and glycerone phosphate from D-glucose: step 3/4. Catalyzes the phosphorylation of D-fructose 6-phosphate to fructose 1,6-bisphosphate by ATP, the first committing step of glycolysis. This Chloroflexus aggregans (strain MD-66 / DSM 9485) protein is ATP-dependent 6-phosphofructokinase.